We begin with the raw amino-acid sequence, 619 residues long: Probable ATP-dependent RNA helicase DDX59 (619 aa).

The segment at 1-101 is disordered; it reads MFVPRSLKIK…KSFSKTQRWP (101 aa). The segment covering 12-27 has biased composition (basic and acidic residues); it reads SSNDDLKSGEAKKSKP. Residue K26 forms a Glycyl lysine isopeptide (Lys-Gly) (interchain with G-Cter in SUMO2) linkage. Polar residues predominate over residues 59–76; the sequence is ASSTNSPSCQLAEVSSTG. S64 carries the phosphoserine modification. Basic and acidic residues predominate over residues 79–91; it reads EGVKDSHPSEEPV. An HIT-type zinc finger spans residues 104 to 133; that stretch reads GEPVCVVCGRYGEYICDKTDEDVCSLECKA. Phosphoserine is present on S160. Positions 203–231 match the Q motif motif; sequence IDFEHCGFPETLNQNLKKSGYEVPTPIQM. The Helicase ATP-binding domain occupies 234 to 405; the sequence is IPVGLLGRDI…DQLLHNPVRI (172 aa). Position 247–254 (247–254) interacts with ATP; the sequence is ADTGSGKT. Positions 353–356 match the DEAD box motif; that stretch reads DEAD. Positions 416–579 constitute a Helicase C-terminal domain; that stretch reads SVRQIILWVE…ILPPQLLNSP (164 aa). The segment covering 583–594 has biased composition (basic and acidic residues); the sequence is EQKRKEQQKDRQ. Residues 583 to 603 form a disordered region; sequence EQKRKEQQKDRQTQNSLVTGA.

The protein belongs to the DEAD box helicase family. DDX59 subfamily. In terms of assembly, interacts (via HIT-type zinc finger) with the RUVBL1/RUVBL2 complex in the presence of ADP.

It is found in the cytoplasm. The protein resides in the nucleus. It catalyses the reaction ATP + H2O = ADP + phosphate + H(+). In Mus musculus (Mouse), this protein is Probable ATP-dependent RNA helicase DDX59 (Ddx59).